A 192-amino-acid polypeptide reads, in one-letter code: Type-4 uracil-DNA glycosylase (192 aa).

Residues Cys18 and Cys21 each contribute to the [4Fe-4S] cluster site. Uracil contacts are provided by residues 45-47, Phe59, and Asn85; that span reads GEG. [4Fe-4S] cluster-binding residues include Cys89 and Cys105. His161 lines the uracil pocket.

This sequence belongs to the uracil-DNA glycosylase (UDG) superfamily. Type 4 (UDGa) family.

The enzyme catalyses Hydrolyzes single-stranded DNA or mismatched double-stranded DNA and polynucleotides, releasing free uracil.. Functionally, removes uracil bases that are present in DNA as a result of either deamination of cytosine or misincorporation of dUMP instead of dTMP. Can remove uracil from double-stranded DNA containing either a U/G or U/A base pair as well as from single-stranded DNA. The sequence is that of Type-4 uracil-DNA glycosylase from Thermotoga maritima (strain ATCC 43589 / DSM 3109 / JCM 10099 / NBRC 100826 / MSB8).